Consider the following 481-residue polypeptide: MASPQSTKTGLNLPAGMNQTSLRLETFSSSFRGISSLSSPSKSTCSDRFIPCRSSSRLHAFDLQDKEPTTPVKEGGNEAYSRLLKSELFGSDFASPLLSPAGGQGSASSPMSPCTNMLRFKTDRSNSSPSSPFSPSILGNDNGHSSDSSPPPKPPRKVPKTPHKVLDAPSLQDDFYLNVVDWSSQNVLAVGLGTCVYLWTASNSKVTKLCDLGPNDSVCSVQWTREGSYISIGTSHGQVQVWDGTQCKRVRTMGGHQTRTGVLAWNSRILSSGSRDRNILQHDIRVQSDFVSKLVGHKSEVCGLKWSHDDRELASGGNDNQLLVWNNHSQQPILKLTEHTAAVKAITWSPHQSSLLASGGGTADRCIRFWNTTNGNQLNSIDTGSQVCNLAWSKNVNEIVSTHGYSQNQIMLWKYPSMSKVATLTGHSMRVLYLATSPDGQTIVTGAGDETLRFWNVFPSVKMQTPVKDTGLWSLGRTQIR.

The tract at residues 100–165 (PAGGQGSASS…RKVPKTPHKV (66 aa)) is disordered. A compositionally biased stretch (low complexity) spans 125 to 136 (SNSSPSSPFSPS). Positions 154-163 (PPRKVPKTPH) are enriched in basic residues. WD repeat units follow at residues 172–209 (QDDF…VTKL), 213–252 (GPND…RVRT), 255–292 (GHQT…DFVS), 296–335 (GHKS…PILK), 338–380 (EHTA…QLNS), 382–423 (DTGS…KVAT), and 426–465 (GHSM…KMQT).

This sequence belongs to the WD repeat CDC20/Fizzy family. In terms of assembly, associates with the APC/C complex. Interacts with CDC20-1, CDC20-2, CYCA1-1, CYCA3-4, CYCB1-1 and CYCB1-2. Binds to GIG1 and PYM.

The protein operates within protein modification; protein ubiquitination. Functionally, activator protein that regulates the ubiquitin ligase activity and substrate specificity of the anaphase promoting complex/cyclosome (APC/C). The chain is Protein FIZZY-RELATED 3 (FZR3) from Arabidopsis thaliana (Mouse-ear cress).